Reading from the N-terminus, the 247-residue chain is DNA polymerase sliding clamp (247 aa).

The protein belongs to the PCNA family. As to quaternary structure, homotrimer. The subunits circularize to form a toroid; DNA passes through its center. Replication factor C (RFC) is required to load the toroid on the DNA.

In terms of biological role, sliding clamp subunit that acts as a moving platform for DNA processing. Responsible for tethering the catalytic subunit of DNA polymerase and other proteins to DNA during high-speed replication. This Natronomonas pharaonis (strain ATCC 35678 / DSM 2160 / CIP 103997 / JCM 8858 / NBRC 14720 / NCIMB 2260 / Gabara) (Halobacterium pharaonis) protein is DNA polymerase sliding clamp.